We begin with the raw amino-acid sequence, 217 residues long: N-(5'-phosphoribosyl)anthranilate isomerase (217 aa).

It belongs to the TrpF family.

The catalysed reaction is N-(5-phospho-beta-D-ribosyl)anthranilate = 1-(2-carboxyphenylamino)-1-deoxy-D-ribulose 5-phosphate. It participates in amino-acid biosynthesis; L-tryptophan biosynthesis; L-tryptophan from chorismate: step 3/5. The sequence is that of N-(5'-phosphoribosyl)anthranilate isomerase from Chlorobium phaeovibrioides (strain DSM 265 / 1930) (Prosthecochloris vibrioformis (strain DSM 265)).